Here is a 266-residue protein sequence, read N- to C-terminus: uncharacterized protein (266 aa).

It belongs to the chlamydial CPn_0087/CT_309/TC_0583 family.

This is an uncharacterized protein from Chlamydia pneumoniae (Chlamydophila pneumoniae).